A 254-amino-acid polypeptide reads, in one-letter code: Nickel import ATP-binding protein NikD (254 aa).

In terms of domain architecture, ABC transporter spans proline 2–valine 241. Glycine 36–serine 43 lines the ATP pocket.

It belongs to the ABC transporter superfamily. Nickel importer (TC 3.A.1.5.3) family. In terms of assembly, the complex is composed of two ATP-binding proteins (NikD and NikE), two transmembrane proteins (NikB and NikC) and a solute-binding protein (NikA).

It localises to the cell inner membrane. It catalyses the reaction Ni(2+)(out) + ATP + H2O = Ni(2+)(in) + ADP + phosphate + H(+). Functionally, part of the ABC transporter complex NikABCDE involved in nickel import. Responsible for energy coupling to the transport system. The polypeptide is Nickel import ATP-binding protein NikD (Escherichia coli O157:H7).